The chain runs to 168 residues: NADH-quinone oxidoreductase subunit B (168 aa).

[4Fe-4S] cluster contacts are provided by cysteine 49, cysteine 50, cysteine 114, and cysteine 144.

It belongs to the complex I 20 kDa subunit family. As to quaternary structure, NDH-1 is composed of 14 different subunits. Subunits NuoB, C, D, E, F, and G constitute the peripheral sector of the complex. The cofactor is [4Fe-4S] cluster.

Its subcellular location is the cell membrane. The enzyme catalyses a quinone + NADH + 5 H(+)(in) = a quinol + NAD(+) + 4 H(+)(out). Functionally, NDH-1 shuttles electrons from NADH, via FMN and iron-sulfur (Fe-S) centers, to quinones in the respiratory chain. Couples the redox reaction to proton translocation (for every two electrons transferred, four hydrogen ions are translocated across the cytoplasmic membrane), and thus conserves the redox energy in a proton gradient. The polypeptide is NADH-quinone oxidoreductase subunit B (Wolbachia pipientis wMel).